A 71-amino-acid polypeptide reads, in one-letter code: uncharacterized protein (71 aa).

This is an uncharacterized protein from Saccharomyces cerevisiae (strain ATCC 204508 / S288c) (Baker's yeast).